Here is a 125-residue protein sequence, read N- to C-terminus: E4-ORF1 (125 aa).

The short motif at 122–125 is the PDZ-binding element; it reads ATLV.

The protein belongs to the dUTPase family. In terms of assembly, binds to human MPDZ.

It localises to the host cytoplasm. The catalysed reaction is dUTP + H2O = dUMP + diphosphate + H(+). In terms of biological role, plays a key role in virus oncogenecity in animals. Binds and sequesters human MUPP1/MPDZ protein in the cytoplasm, preventing it from playing a role in cellular proliferation regulation. Induces cell transformation, probably by inactivating MPDZ protein. The sequence is that of E4-ORF1 (E4) from Homo sapiens (Human).